The chain runs to 532 residues: Exodeoxyribonuclease 7 large subunit (532 aa).

The segment at 497–532 (AITTGEGTPAPETAAAPKKKPAKPASSDPGNQGNLF) is disordered. Positions 499-512 (TTGEGTPAPETAAA) are enriched in low complexity.

The protein belongs to the XseA family. As to quaternary structure, heterooligomer composed of large and small subunits.

Its subcellular location is the cytoplasm. The catalysed reaction is Exonucleolytic cleavage in either 5'- to 3'- or 3'- to 5'-direction to yield nucleoside 5'-phosphates.. In terms of biological role, bidirectionally degrades single-stranded DNA into large acid-insoluble oligonucleotides, which are then degraded further into small acid-soluble oligonucleotides. The protein is Exodeoxyribonuclease 7 large subunit of Agrobacterium fabrum (strain C58 / ATCC 33970) (Agrobacterium tumefaciens (strain C58)).